The primary structure comprises 283 residues: Probable aquaporin NIP4-2 (283 aa).

Position 1 is an N-acetylmethionine (M1). The span at M1–C21 shows a compositional bias: basic and acidic residues. Residues M1–D23 are disordered. A run of 2 helical transmembrane segments spans residues G51–G71 and G77–S97. The NPA 1 signature appears at N102–A104. 3 consecutive transmembrane segments (helical) span residues V120–L140, A161–T181, and L189–S209. The NPA 2 signature appears at N214–A216. A helical membrane pass occupies residues I231 to F251. A Phosphoserine modification is found at S267.

The protein belongs to the MIP/aquaporin (TC 1.A.8) family. NIP (TC 1.A.8.12) subfamily.

Its subcellular location is the membrane. Aquaporins facilitate the transport of water and small neutral solutes across cell membranes. This is Probable aquaporin NIP4-2 (NIP4-2) from Arabidopsis thaliana (Mouse-ear cress).